The sequence spans 132 residues: Venom CUB domain-containing protein 2 (132 aa).

Positions 1–17 (MKTLFLAIALFSAVALA) are cleaved as a signal peptide. The CUB domain maps to 22–129 (ESAELVPGGE…RGFVACKATA (108 aa)). Disulfide bonds link Cys-66–Cys-125 and Cys-77–Cys-94.

The protein belongs to the venom CUB family. As to expression, expressed by the venom gland (posterior main gland) (at protein level).

The protein localises to the secreted. This is Venom CUB domain-containing protein 2 from Platymeris rhadamanthus (Red spot assassin bug).